Reading from the N-terminus, the 620-residue chain is Chaperone protein HscA homolog (620 aa).

Belongs to the heat shock protein 70 family.

Its function is as follows. Chaperone involved in the maturation of iron-sulfur cluster-containing proteins. Has a low intrinsic ATPase activity which is markedly stimulated by HscB. The chain is Chaperone protein HscA homolog from Pseudomonas putida (strain ATCC 47054 / DSM 6125 / CFBP 8728 / NCIMB 11950 / KT2440).